A 196-amino-acid polypeptide reads, in one-letter code: Guanylate kinase (196 aa).

The region spanning 8-189 (GKIIIISGPS…AADKLRHILY (182 aa)) is the Guanylate kinase-like domain. 15–22 (GPSGVGKK) serves as a coordination point for ATP.

This sequence belongs to the guanylate kinase family.

The protein resides in the cytoplasm. The enzyme catalyses GMP + ATP = GDP + ADP. Its function is as follows. Essential for recycling GMP and indirectly, cGMP. This Malacoplasma penetrans (strain HF-2) (Mycoplasma penetrans) protein is Guanylate kinase.